A 203-amino-acid chain; its full sequence is Holliday junction branch migration complex subunit RuvA (203 aa).

The interval 1-62 (MYEYFLGQVT…ENGMSLFGFF (62 aa)) is domain I. The tract at residues 63-141 (DADEKALFEK…DLNVDVTGQT (79 aa)) is domain II. A flexible linker region spans residues 142–148 (ALDVDAP). The tract at residues 149-203 (AVDGALADALAALEALGYSKADVKKVTKKLETFSQTQGADTNTLLSEGLRLLMKK) is domain III.

It belongs to the RuvA family. In terms of assembly, homotetramer. Forms an RuvA(8)-RuvB(12)-Holliday junction (HJ) complex. HJ DNA is sandwiched between 2 RuvA tetramers; dsDNA enters through RuvA and exits via RuvB. An RuvB hexamer assembles on each DNA strand where it exits the tetramer. Each RuvB hexamer is contacted by two RuvA subunits (via domain III) on 2 adjacent RuvB subunits; this complex drives branch migration. In the full resolvosome a probable DNA-RuvA(4)-RuvB(12)-RuvC(2) complex forms which resolves the HJ.

It localises to the cytoplasm. In terms of biological role, the RuvA-RuvB-RuvC complex processes Holliday junction (HJ) DNA during genetic recombination and DNA repair, while the RuvA-RuvB complex plays an important role in the rescue of blocked DNA replication forks via replication fork reversal (RFR). RuvA specifically binds to HJ cruciform DNA, conferring on it an open structure. The RuvB hexamer acts as an ATP-dependent pump, pulling dsDNA into and through the RuvAB complex. HJ branch migration allows RuvC to scan DNA until it finds its consensus sequence, where it cleaves and resolves the cruciform DNA. This Lactiplantibacillus plantarum (strain ATCC BAA-793 / NCIMB 8826 / WCFS1) (Lactobacillus plantarum) protein is Holliday junction branch migration complex subunit RuvA.